The primary structure comprises 369 residues: UDP-N-acetylglucosamine--N-acetylmuramyl-(pentapeptide) pyrophosphoryl-undecaprenol N-acetylglucosamine transferase (369 aa).

UDP-N-acetyl-alpha-D-glucosamine is bound by residues 16-18 (TGG), Asn-130, Arg-171, Ser-196, and Gln-297.

This sequence belongs to the glycosyltransferase 28 family. MurG subfamily.

It localises to the cell inner membrane. It carries out the reaction di-trans,octa-cis-undecaprenyl diphospho-N-acetyl-alpha-D-muramoyl-L-alanyl-D-glutamyl-meso-2,6-diaminopimeloyl-D-alanyl-D-alanine + UDP-N-acetyl-alpha-D-glucosamine = di-trans,octa-cis-undecaprenyl diphospho-[N-acetyl-alpha-D-glucosaminyl-(1-&gt;4)]-N-acetyl-alpha-D-muramoyl-L-alanyl-D-glutamyl-meso-2,6-diaminopimeloyl-D-alanyl-D-alanine + UDP + H(+). It participates in cell wall biogenesis; peptidoglycan biosynthesis. Its function is as follows. Cell wall formation. Catalyzes the transfer of a GlcNAc subunit on undecaprenyl-pyrophosphoryl-MurNAc-pentapeptide (lipid intermediate I) to form undecaprenyl-pyrophosphoryl-MurNAc-(pentapeptide)GlcNAc (lipid intermediate II). This chain is UDP-N-acetylglucosamine--N-acetylmuramyl-(pentapeptide) pyrophosphoryl-undecaprenol N-acetylglucosamine transferase, found in Desulfotalea psychrophila (strain LSv54 / DSM 12343).